Here is a 144-residue protein sequence, read N- to C-terminus: FK506-binding protein 2 (144 aa).

Positions 1 to 20 (MARIIVLIVAFMALIAGVFA) are cleaved as a signal peptide. Residues 48-136 (GDTVSVHYTG…IFTTELVSID (89 aa)) form the PPIase FKBP-type domain. A Prevents secretion from ER motif is present at residues 141 to 144 (RDEL).

This sequence belongs to the FKBP-type PPIase family. FKBP2 subfamily.

The protein resides in the endoplasmic reticulum. The enzyme catalyses [protein]-peptidylproline (omega=180) = [protein]-peptidylproline (omega=0). Inhibited by both FK506 and rapamycin. PPIases accelerate the folding of proteins. It catalyzes the cis-trans isomerization of proline imidic peptide bonds in oligopeptides. This chain is FK506-binding protein 2 (FPR2), found in Yarrowia lipolytica (strain CLIB 122 / E 150) (Yeast).